Reading from the N-terminus, the 802-residue chain is DSC E3 ubiquitin ligase complex subunit A (802 aa).

Positions 1-22 are cleaved as a signal peptide; it reads MDNRGSFFFLLIVFYLLLSSQS. Residues 23 to 381 are Lumenal-facing; sequence RPPLLDQDRE…TGPKIEEYDK (359 aa). N-linked (GlcNAc...) asparagine glycans are attached at residues N48, N71, N115, N126, N148, and N166. The helical transmembrane segment at 382–402 threads the bilayer; sequence YSARLVFIICGVFAAQITLLL. Over 403–429 the chain is Cytoplasmic; the sequence is RQIKEASTPSTRSRISFYTIALMAFGD. Residues 430-450 form a helical membrane-spanning segment; it reads AFVLIFILLELYPAVSFLVMA. The Lumenal segment spans residues 451 to 453; that stretch reads TAA. A helical transmembrane segment spans residues 454 to 474; it reads FLTFLSVSYIGMKFMMEIWAV. Topologically, residues 475-550 are cytoplasmic; sequence QAPERREQER…QETRNDVGAM (76 aa). The segment at 478 to 541 is disordered; sequence ERREQERRSN…TNRGTTSAAQ (64 aa). Residues 532–541 show a composition bias toward polar residues; it reads TNRGTTSAAQ. Residues 551 to 571 traverse the membrane as a helical segment; sequence YARFYFVLFVMLIISIWSFLW. Residues 572 to 574 are Lumenal-facing; the sequence is PNR. Residues 575–595 form a helical membrane-spanning segment; the sequence is LGALYARALAFVYLSFWTPQI. Residues 596–608 lie on the Cytoplasmic side of the membrane; sequence GRNIIRNCRKALR. The chain crosses the membrane as a helical span at residues 609–629; the sequence is WDFVIGQSILRLFPFVYFLTV. The Lumenal portion of the chain corresponds to 630–642; the sequence is RGNVLFIHPDTTT. A helical membrane pass occupies residues 643 to 663; it reads AFALAGWVWIQVWVLASQDIL. The Cytoplasmic segment spans residues 664–802; it reads GPRFFVPRGW…PICRESIPPV (139 aa). The segment at 732–796 adopts an RING-type; atypical zinc-finger fold; sequence CAICMQEIEV…RLRLQCPICR (65 aa).

As to quaternary structure, component of the DSC E3 ubiquitin ligase complex composed of dscA, dscB, dscC and dscD.

It localises to the endoplasmic reticulum membrane. The enzyme catalyses S-ubiquitinyl-[E2 ubiquitin-conjugating enzyme]-L-cysteine + [acceptor protein]-L-lysine = [E2 ubiquitin-conjugating enzyme]-L-cysteine + N(6)-ubiquitinyl-[acceptor protein]-L-lysine.. Its pathway is protein modification; protein ubiquitination. Functionally, catalytic component of the DSC E3 ubiquitin ligase complex which is required for the srbA transcriptional activator proteolytic cleavage to release the soluble transcription factor from the membrane in low oxygen or sterol conditions. Required for growth during hypoxia and triazole drug susceptibility, as well as for virulence in a murine model of invasive pulmonary aspergillosis (IPA). This is DSC E3 ubiquitin ligase complex subunit A from Aspergillus fumigatus (strain CBS 144.89 / FGSC A1163 / CEA10) (Neosartorya fumigata).